Reading from the N-terminus, the 406-residue chain is Nicotinate phosphoribosyltransferase (406 aa).

Phosphohistidine; by autocatalysis is present on histidine 225.

It belongs to the NAPRTase family. Post-translationally, transiently phosphorylated on a His residue during the reaction cycle. Phosphorylation strongly increases the affinity for substrates and increases the rate of nicotinate D-ribonucleotide production. Dephosphorylation regenerates the low-affinity form of the enzyme, leading to product release.

The enzyme catalyses nicotinate + 5-phospho-alpha-D-ribose 1-diphosphate + ATP + H2O = nicotinate beta-D-ribonucleotide + ADP + phosphate + diphosphate. Its pathway is cofactor biosynthesis; NAD(+) biosynthesis; nicotinate D-ribonucleotide from nicotinate: step 1/1. In terms of biological role, catalyzes the synthesis of beta-nicotinate D-ribonucleotide from nicotinate and 5-phospho-D-ribose 1-phosphate at the expense of ATP. This chain is Nicotinate phosphoribosyltransferase, found in Psychromonas ingrahamii (strain DSM 17664 / CCUG 51855 / 37).